The sequence spans 426 residues: D-tagatose-1,6-bisphosphate aldolase subunit KbaZ (426 aa).

This sequence belongs to the GatZ/KbaZ family. KbaZ subfamily. In terms of assembly, forms a complex with KbaY.

The protein operates within carbohydrate metabolism; D-tagatose 6-phosphate degradation; D-glyceraldehyde 3-phosphate and glycerone phosphate from D-tagatose 6-phosphate: step 2/2. In terms of biological role, component of the tagatose-1,6-bisphosphate aldolase KbaYZ that is required for full activity and stability of the Y subunit. Could have a chaperone-like function for the proper and stable folding of KbaY. When expressed alone, KbaZ does not show any aldolase activity. The chain is D-tagatose-1,6-bisphosphate aldolase subunit KbaZ from Escherichia coli O7:K1 (strain IAI39 / ExPEC).